A 183-amino-acid polypeptide reads, in one-letter code: Hypoxanthine/guanine phosphoribosyltransferase (183 aa).

This sequence belongs to the purine/pyrimidine phosphoribosyltransferase family. Archaeal HPRT subfamily. Homodimer.

The protein resides in the cytoplasm. The enzyme catalyses IMP + diphosphate = hypoxanthine + 5-phospho-alpha-D-ribose 1-diphosphate. The catalysed reaction is GMP + diphosphate = guanine + 5-phospho-alpha-D-ribose 1-diphosphate. The protein operates within purine metabolism; IMP biosynthesis via salvage pathway; IMP from hypoxanthine: step 1/1. Functionally, catalyzes a salvage reaction resulting in the formation of IMP that is energically less costly than de novo synthesis. The chain is Hypoxanthine/guanine phosphoribosyltransferase from Methanocaldococcus infernus (strain DSM 11812 / JCM 15783 / ME).